Reading from the N-terminus, the 233-residue chain is Cilia- and flagella-associated protein 299 (233 aa).

Its subcellular location is the cytoplasm. It is found in the nucleus. Its function is as follows. May be involved in spermatogenesis. The polypeptide is Cilia- and flagella-associated protein 299 (Homo sapiens (Human)).